Here is a 259-residue protein sequence, read N- to C-terminus: O-antigen export system permease protein RfbA (259 aa).

The next 6 helical transmembrane spans lie at 33–53 (LGYL…YFIF), 73–95 (FPWQ…NAQI), 111–131 (VMME…FLFV), 142–162 (WGIP…SIIF), 176–196 (VSLG…SDMI), and 228–248 (EYIS…LSIF). The region spanning 33-251 (LGYLWSVANP…VVGLSIFNKL (219 aa)) is the ABC transmembrane type-2 domain.

The protein belongs to the ABC-2 integral membrane protein family.

The protein localises to the cell inner membrane. May form an ATP-driven O-antigen export apparatus, in association with RfbB. This Klebsiella pneumoniae protein is O-antigen export system permease protein RfbA (rfbA).